The chain runs to 151 residues: Small ribosomal subunit protein uS19 (151 aa).

Belongs to the universal ribosomal protein uS19 family.

Protein S19 forms a complex with S13 that binds strongly to the 16S ribosomal RNA. The sequence is that of Small ribosomal subunit protein uS19 from Picrophilus torridus (strain ATCC 700027 / DSM 9790 / JCM 10055 / NBRC 100828 / KAW 2/3).